A 117-amino-acid chain; its full sequence is uncharacterized protein (117 aa).

A disordered region spans residues 16 to 56 (FSQSSDGRSNGGGSSSGDSVSTTSDGLLTTGTSPNTSSTSL). A compositionally biased stretch (low complexity) spans 31–56 (SGDSVSTTSDGLLTTGTSPNTSSTSL).

This is an uncharacterized protein from Saccharomyces cerevisiae (strain ATCC 204508 / S288c) (Baker's yeast).